A 612-amino-acid chain; its full sequence is UvrABC system protein C (612 aa).

Positions 20-98 (THSGVYRMLD…IKQHRPKYNI (79 aa)) constitute a GIY-YIG domain. Residues 208–243 (SSVLEEISANMYQASEDMEYEKAQVYRDQLVVLRKL) enclose the UVR domain.

This sequence belongs to the UvrC family. In terms of assembly, interacts with UvrB in an incision complex.

The protein resides in the cytoplasm. Its function is as follows. The UvrABC repair system catalyzes the recognition and processing of DNA lesions. UvrC both incises the 5' and 3' sides of the lesion. The N-terminal half is responsible for the 3' incision and the C-terminal half is responsible for the 5' incision. The sequence is that of UvrABC system protein C from Francisella tularensis subsp. holarctica (strain LVS).